Here is a 296-residue protein sequence, read N- to C-terminus: Ribosomal RNA small subunit methyltransferase A (296 aa).

S-adenosyl-L-methionine is bound by residues Asn-32, Leu-34, Gly-59, Glu-80, Asp-105, and Asn-130.

This sequence belongs to the class I-like SAM-binding methyltransferase superfamily. rRNA adenine N(6)-methyltransferase family. RsmA subfamily.

The protein localises to the cytoplasm. It carries out the reaction adenosine(1518)/adenosine(1519) in 16S rRNA + 4 S-adenosyl-L-methionine = N(6)-dimethyladenosine(1518)/N(6)-dimethyladenosine(1519) in 16S rRNA + 4 S-adenosyl-L-homocysteine + 4 H(+). In terms of biological role, specifically dimethylates two adjacent adenosines (A1518 and A1519) in the loop of a conserved hairpin near the 3'-end of 16S rRNA in the 30S particle. May play a critical role in biogenesis of 30S subunits. The chain is Ribosomal RNA small subunit methyltransferase A from Levilactobacillus brevis (strain ATCC 367 / BCRC 12310 / CIP 105137 / JCM 1170 / LMG 11437 / NCIMB 947 / NCTC 947) (Lactobacillus brevis).